The sequence spans 279 residues: Phosphonoacetaldehyde hydrolase (279 aa).

The active-site Nucleophile is aspartate 20. Mg(2+)-binding residues include aspartate 20 and alanine 22. Residue lysine 62 is the Schiff-base intermediate with substrate of the active site. Residue aspartate 196 participates in Mg(2+) binding.

Belongs to the HAD-like hydrolase superfamily. PhnX family. Homodimer. It depends on Mg(2+) as a cofactor.

It catalyses the reaction phosphonoacetaldehyde + H2O = acetaldehyde + phosphate + H(+). In terms of biological role, involved in phosphonate degradation. The chain is Phosphonoacetaldehyde hydrolase from Aeromonas hydrophila subsp. hydrophila (strain ATCC 7966 / DSM 30187 / BCRC 13018 / CCUG 14551 / JCM 1027 / KCTC 2358 / NCIMB 9240 / NCTC 8049).